The following is a 164-amino-acid chain: MEMTHAQRLILSNQYKMMTLLDPENGERYRRLQTIIERGYGLQMRELDRDFGELSEETCRTVIDIMEMYHALQVSRSNMKEGQSIDERRVTFLGFDAATEARFLGYVRFLVNTEGRYTHFDAGTHGFNAQTPMWEKYQRMLKVWQACPRQYHLCANEIMQIINA.

The protein belongs to the UPF0304 family.

In Cronobacter sakazakii (strain ATCC BAA-894) (Enterobacter sakazakii), this protein is UPF0304 protein ESA_00925.